Reading from the N-terminus, the 192-residue chain is UPF0301 protein BMA10247_1859 (192 aa).

The protein belongs to the UPF0301 (AlgH) family.

The chain is UPF0301 protein BMA10247_1859 from Burkholderia mallei (strain NCTC 10247).